The following is a 387-amino-acid chain: Enoyl-[acyl-carrier-protein] reductase 2, mitochondrial (387 aa).

A mitochondrion-targeting transit peptide spans 1-23 (MYRNQLARASLRSTSSINQIRNM). Tyr79 serves as the catalytic Proton donor. NADP(+) is bound by residues Asn172, 199 to 202 (NSAV), 222 to 224 (RDR), 297 to 300 (YGGM), 322 to 324 (FWV), and Lys382.

The protein belongs to the zinc-containing alcohol dehydrogenase family. Quinone oxidoreductase subfamily. In terms of assembly, homodimer.

Its subcellular location is the mitochondrion matrix. The catalysed reaction is a 2,3-saturated acyl-[ACP] + NADP(+) = a (2E)-enoyl-[ACP] + NADPH + H(+). Catalyzes the NADPH-dependent reduction of trans-2-enoyl thioesters in mitochondrial fatty acid synthesis (fatty acid synthesis type II). Fatty acid chain elongation in mitochondria uses acyl carrier protein (ACP) as an acyl group carrier, but the enzyme accepts both ACP and CoA thioesters as substrates in vitro. Required for respiration and the maintenance of the mitochondrial compartment. In Debaryomyces hansenii (strain ATCC 36239 / CBS 767 / BCRC 21394 / JCM 1990 / NBRC 0083 / IGC 2968) (Yeast), this protein is Enoyl-[acyl-carrier-protein] reductase 2, mitochondrial (ETR2).